Consider the following 360-residue polypeptide: Glycoprotein-N-acetylgalactosamine 3-beta-galactosyltransferase 1 (360 aa).

The Cytoplasmic portion of the chain corresponds to 1–7 (MSIICAK). A helical; Signal-anchor for type II membrane protein membrane pass occupies residues 8 to 28 (VAWLPLTLGTAMGFLITFYLA). Residues 29-360 (RTLLERNSQP…SDFLEPPMES (332 aa)) lie on the Lumenal side of the membrane. Cysteine 79 and cysteine 103 form a disulfide bridge. UDP is bound by residues methionine 82, glutamate 126, glycine 127, arginine 128, and lysine 134. A glycan (N-linked (GlcNAc...) asparagine) is linked at asparagine 148. Aspartate 157 is a UDP binding site. Residues aspartate 157 and aspartate 159 each coordinate Mn(2+). N-linked (GlcNAc...) asparagine glycosylation is present at asparagine 173. Cysteine 220 and cysteine 234 are oxidised to a cystine. Tryptophan 274 contacts a glycoprotein. A disulfide bridge links cysteine 289 with cysteine 290. Residues histidine 298 and tyrosine 299 each contribute to the UDP site. Histidine 298 is a Mn(2+) binding site. N-linked (GlcNAc...) asparagine glycans are attached at residues asparagine 341 and asparagine 347.

This sequence belongs to the glycosyltransferase 31 family. Beta3-Gal-T subfamily. In terms of assembly, homodimer; disulfide-linked. The cofactor is Mn(2+).

It localises to the membrane. It catalyses the reaction an N-acetyl-alpha-D-galactosaminyl derivative + UDP-alpha-D-galactose = a beta-D-galactosyl-(1-&gt;3)-N-acetyl-alpha-D-galactosaminyl derivative + UDP + H(+). It functions in the pathway protein modification; protein glycosylation. Functionally, glycosyltransferase that generates the core 1 O-glycan Gal-beta1-3GalNAc-alpha1-Ser/Thr (T antigen), which is a precursor for many extended O-glycans in glycoproteins. In Xenopus laevis (African clawed frog), this protein is Glycoprotein-N-acetylgalactosamine 3-beta-galactosyltransferase 1 (c1galt1).